A 224-amino-acid polypeptide reads, in one-letter code: Uracil phosphoribosyltransferase (224 aa).

Lys-38–Lys-42 is a GTP binding site. 5-phospho-alpha-D-ribose 1-diphosphate contacts are provided by residues Arg-87, Arg-112, and Asp-140 to Thr-148. Residues Ile-204 and Gly-209 to Ala-211 each bind uracil. Asp-210 is a 5-phospho-alpha-D-ribose 1-diphosphate binding site.

It belongs to the UPRTase family. It depends on Mg(2+) as a cofactor.

It catalyses the reaction UMP + diphosphate = 5-phospho-alpha-D-ribose 1-diphosphate + uracil. It participates in pyrimidine metabolism; UMP biosynthesis via salvage pathway; UMP from uracil: step 1/1. With respect to regulation, allosterically activated by GTP. Catalyzes the conversion of uracil and 5-phospho-alpha-D-ribose 1-diphosphate (PRPP) to UMP and diphosphate. The polypeptide is Uracil phosphoribosyltransferase (Thermococcus gammatolerans (strain DSM 15229 / JCM 11827 / EJ3)).